The sequence spans 321 residues: Homoserine O-succinyltransferase (321 aa).

Catalysis depends on C142, which acts as the Acyl-thioester intermediate. Residues K163 and S192 each coordinate substrate. The Proton acceptor role is filled by H235. Residue E237 is part of the active site. Residue R249 coordinates substrate.

It belongs to the MetA family.

It localises to the cytoplasm. It catalyses the reaction L-homoserine + succinyl-CoA = O-succinyl-L-homoserine + CoA. The protein operates within amino-acid biosynthesis; L-methionine biosynthesis via de novo pathway; O-succinyl-L-homoserine from L-homoserine: step 1/1. In terms of biological role, transfers a succinyl group from succinyl-CoA to L-homoserine, forming succinyl-L-homoserine. This Shewanella loihica (strain ATCC BAA-1088 / PV-4) protein is Homoserine O-succinyltransferase.